A 243-amino-acid polypeptide reads, in one-letter code: Uridylate kinase (243 aa).

Position 18-21 (18-21) interacts with ATP; that stretch reads KLGG. Glycine 59 contributes to the UMP binding site. Glycine 60 and arginine 64 together coordinate ATP. UMP-binding positions include aspartate 79 and 140 to 147; that span reads MGMPYFST. ATP contacts are provided by tyrosine 173 and aspartate 176.

The protein belongs to the UMP kinase family. In terms of assembly, homohexamer.

It is found in the cytoplasm. The enzyme catalyses UMP + ATP = UDP + ADP. It functions in the pathway pyrimidine metabolism; CTP biosynthesis via de novo pathway; UDP from UMP (UMPK route): step 1/1. Inhibited by UTP. Its function is as follows. Catalyzes the reversible phosphorylation of UMP to UDP. In Corynebacterium efficiens (strain DSM 44549 / YS-314 / AJ 12310 / JCM 11189 / NBRC 100395), this protein is Uridylate kinase.